The chain runs to 251 residues: Hydroxyacylglutathione hydrolase (251 aa).

H53, H55, D57, H58, H110, D127, and H165 together coordinate Zn(2+).

Belongs to the metallo-beta-lactamase superfamily. Glyoxalase II family. As to quaternary structure, monomer. The cofactor is Zn(2+).

It catalyses the reaction an S-(2-hydroxyacyl)glutathione + H2O = a 2-hydroxy carboxylate + glutathione + H(+). It functions in the pathway secondary metabolite metabolism; methylglyoxal degradation; (R)-lactate from methylglyoxal: step 2/2. In terms of biological role, thiolesterase that catalyzes the hydrolysis of S-D-lactoyl-glutathione to form glutathione and D-lactic acid. This Escherichia coli (strain UTI89 / UPEC) protein is Hydroxyacylglutathione hydrolase.